A 295-amino-acid polypeptide reads, in one-letter code: THO complex subunit 4C (295 aa).

Residues 1–67 form a disordered region; it reads MSDALNMTLD…GPLAVNTRPS (67 aa). Residue Ser2 is modified to N-acetylserine. The span at 11-22 shows a compositional bias: basic and acidic residues; the sequence is EIVKKSKSERSA. Over residues 38–55 the composition is skewed to gly residues; the sequence is GRGGPNGVVGGGRGGGPV. One can recognise an RRM domain in the interval 107 to 184; that stretch reads TTVYITNLDQ…RPMKLEILGG (78 aa). A disordered region spans residues 212–295; the sequence is QGVRGGRVGR…SYHAEAMNIS (84 aa). Gly residues-rich tracts occupy residues 213–227 and 242–267; these read GVRGGRVGRGRGSGP and VTAGRGGFRGRGRGNGGGRGNKSGGR. The segment covering 271-288 has biased composition (basic and acidic residues); it reads KPVEKSAADLDKDLESYH.

Belongs to the ALYREF family. As to quaternary structure, interacts with PARP1.

It is found in the nucleus. The protein resides in the nucleoplasm. It localises to the nucleolus. Functionally, export adapter involved in nuclear export of spliced and unspliced mRNA. The protein is THO complex subunit 4C of Arabidopsis thaliana (Mouse-ear cress).